The following is a 131-amino-acid chain: Riboflavin kinase (131 aa).

11–16 (GLQKAG) provides a ligand contact to CDP. 2 residues coordinate Mg(2+): Thr-40 and Asn-42. Residues Thr-98 and Glu-106 each coordinate FMN. 111–114 (EKLR) contributes to the CDP binding site.

The protein belongs to the archaeal riboflavin kinase family. The cofactor is Mg(2+).

The catalysed reaction is riboflavin + CTP = CDP + FMN + H(+). It functions in the pathway cofactor biosynthesis; FMN biosynthesis; FMN from riboflavin (CTP route): step 1/1. In terms of biological role, catalyzes the CTP-dependent phosphorylation of riboflavin (vitamin B2) to form flavin mononucleotide (FMN). This chain is Riboflavin kinase, found in Methanosphaera stadtmanae (strain ATCC 43021 / DSM 3091 / JCM 11832 / MCB-3).